Reading from the N-terminus, the 119-residue chain is uncharacterized protein (119 aa).

A helical transmembrane segment spans residues 30–50 (LMTLPCVLFLSSFGQAVIVVL).

It is found in the membrane. This is an uncharacterized protein from Saccharomyces cerevisiae (strain ATCC 204508 / S288c) (Baker's yeast).